We begin with the raw amino-acid sequence, 499 residues long: Low-affinity inorganic phosphate transporter PitB (499 aa).

A run of 10 helical transmembrane segments spans residues 5-25 (FVGLDIYTGLLLLLALAFVLF), 52-72 (LAVVMAAFFNFFGVLLGGLSV), 94-114 (LAMVFSMLLAAIIWNLGTWFF), 124-144 (LIGAIIGIGLTNALLTGSSVM), 155-175 (IFSSLIVSPIVGLVIAGGLIF), 207-227 (PFWTRIALIVSAAGVAFSHGA), 233-253 (GIGLVMLVLVGIAPAGFVVNM), 382-402 (APVWIIMAVALALGIGTMIGW), 430-450 (AAVSIGLASYIGMPVSTTHVL), and 473-493 (ILMAWVFTLPAAIFLSGGLYW).

The protein belongs to the inorganic phosphate transporter (PiT) (TC 2.A.20) family. Pit subfamily.

It is found in the cell inner membrane. The enzyme catalyses phosphate(in) + H(+)(in) = phosphate(out) + H(+)(out). Its function is as follows. Low-affinity inorganic phosphate transporter. The polypeptide is Low-affinity inorganic phosphate transporter PitB (Escherichia coli (strain K12)).